Here is a 607-residue protein sequence, read N- to C-terminus: WD repeat-containing protein 1 (607 aa).

WD repeat units lie at residues 4–45 (ELKK…IRNI), 48–87 (PAIA…IWDT), 93–135 (LLKY…LWDT), 138–176 (SVGE…FFEG), 180–218 (KFKF…LYDG), 224–263 (VGNL…IWDV), 270–306 (TTFH…YLDK), 311–351 (RPLR…YWDA), 358–408 (TFTG…KMDV), 432–474 (LKDK…LYSI), 480–518 (KDEG…VFNV), 523–561 (SEQN…VWTL), and 566–604 (ARIK…QWTV).

This sequence belongs to the WD repeat AIP1 family.

Its subcellular location is the cell membrane. It is found in the cytoplasm. It localises to the cytoskeleton. The protein resides in the nucleus. Induces disassembly of actin filaments in conjunction with ADF/cofilin family proteins. Doesn't sever actin filaments alone, but caps the barbed ends of filaments severed by cofilin, which blocks annealing and depolymerization and allows more extensive severing by cofilin. The sequence is that of WD repeat-containing protein 1 from Xenopus tropicalis (Western clawed frog).